A 744-amino-acid chain; its full sequence is Zinc finger protein 483 (744 aa).

The SCAN box domain maps to 52-134 (RQRFRWFCYS…TLIEDLTQML (83 aa)). The interval 137 to 156 (KDPVSQDSTVSQEENSKEDK) is disordered. A KRAB domain is found at 170-241 (ITLKDVAVNF…EEVSKSSRLD (72 aa)). Disordered regions lie at residues 263 to 308 (ESQQ…SPFG) and 350 to 385 (KEKT…KIHL). The span at 277–293 (NQGNSKGRVAQNKTLGS) shows a compositional bias: polar residues. 2 stretches are compositionally biased toward basic and acidic residues: residues 298–308 (KKFDPDKSPFG) and 350–363 (KEKT…KSND). 11 C2H2-type zinc fingers span residues 439 to 461 (HKCS…RRIH), 467 to 489 (YMCN…HRTH), 495 to 517 (FKCD…QRIH), 523 to 545 (YKCK…QRIH), 551 to 573 (YTCS…QRIH), 579 to 601 (YKCG…QRIH), 607 to 629 (YLCN…QRLH), 635 to 657 (YKCN…QRIH), 663 to 685 (YKCK…HRIH), 691 to 713 (YECN…LKIH), and 719 to 741 (YECN…RGFH).

It belongs to the krueppel C2H2-type zinc-finger protein family.

It localises to the nucleus. In terms of biological role, may be involved in transcriptional regulation. The chain is Zinc finger protein 483 (ZNF483) from Homo sapiens (Human).